Reading from the N-terminus, the 276-residue chain is NADPH-dependent 7-cyano-7-deazaguanine reductase (276 aa).

A substrate-binding site is contributed by 83-85 (IES). 85 to 86 (SK) serves as a coordination point for NADPH. The active-site Thioimide intermediate is Cys-184. The Proton donor role is filled by Asp-191. Residue 223-224 (HE) coordinates substrate. Residue 252–253 (RG) participates in NADPH binding.

This sequence belongs to the GTP cyclohydrolase I family. QueF type 2 subfamily. As to quaternary structure, homodimer.

It localises to the cytoplasm. It catalyses the reaction 7-aminomethyl-7-carbaguanine + 2 NADP(+) = 7-cyano-7-deazaguanine + 2 NADPH + 3 H(+). Its pathway is tRNA modification; tRNA-queuosine biosynthesis. Catalyzes the NADPH-dependent reduction of 7-cyano-7-deazaguanine (preQ0) to 7-aminomethyl-7-deazaguanine (preQ1). This Pseudomonas syringae pv. tomato (strain ATCC BAA-871 / DC3000) protein is NADPH-dependent 7-cyano-7-deazaguanine reductase.